The following is a 331-amino-acid chain: Cilia- and flagella-associated protein 119 (331 aa).

Residue Ser34 is modified to Phosphoserine. Disordered regions lie at residues 236-271 (LWPE…PEPE) and 309-331 (SSKL…SKTK). The stretch at 286-317 (VNKELEQLQGLVEERLKASEERLSSKLTALER) forms a coiled coil.

It is found in the cell projection. The protein resides in the cilium. Its subcellular location is the flagellum. It localises to the cytoplasmic vesicle. The protein localises to the secretory vesicle. It is found in the acrosome. The protein resides in the cytoplasm. The polypeptide is Cilia- and flagella-associated protein 119 (Homo sapiens (Human)).